The primary structure comprises 247 residues: MLALRSGLRTALAPRVLTPQVCSPFATGPRQSNGTFYEFRTYFLKPSKTNEFLENFKNSVHLRTAHSEMIGYWTVEFGGRTNRVFHIWKYDNFAHRTAVRKALAKDKEWQERFLIPNLAFIDKQEVEITYLVPWCKIGTPPKEGVYELATFQMKPGGPALWGNAFKRAVNAHVELGYSTLVGVFHTEYGALNRVHVLWWNESADSRAAGRHWSHEDPRVVAAVRESVSYLESQQNTFLIPTSFSPLK.

Residues Lys-45, Lys-48, Lys-57, and Lys-166 each carry the N6-succinyllysine modification.

It belongs to the NipSnap family.

It is found in the cytoplasm. Its subcellular location is the cytosol. This Mus musculus (Mouse) protein is Protein NipSnap homolog 3B (Nipsnap3b).